A 445-amino-acid chain; its full sequence is Probable D-serine dehydratase (445 aa).

N6-(pyridoxal phosphate)lysine is present on Lys111.

It belongs to the serine/threonine dehydratase family. DsdA subfamily. Requires pyridoxal 5'-phosphate as cofactor.

It carries out the reaction D-serine = pyruvate + NH4(+). In Burkholderia pseudomallei (strain K96243), this protein is Probable D-serine dehydratase.